We begin with the raw amino-acid sequence, 182 residues long: DOMON domain-containing protein Y73F4A.1 (182 aa).

Positions Met-1 to Ser-18 are cleaved as a signal peptide. The DOMON domain occupies Glu-26–Gly-143. N-linked (GlcNAc...) asparagine glycans are attached at residues Asn-47 and Asn-128.

It localises to the secreted. This is DOMON domain-containing protein Y73F4A.1 from Caenorhabditis elegans.